Consider the following 259-residue polypeptide: Early E4 30 kDa protein (259 aa).

It belongs to the adenoviridae E4 30 to 34 kDa protein family. As to quaternary structure, interacts with E1B-55k.

It localises to the host nucleus. The protein localises to the host cytoplasm. In terms of biological role, plays a major role to prevent cellular inhibition of viral genome replication by nuclear bodies. Assembles an SCF-like E3 ubiquitin ligase complex based on the cellular proteins ELOB, ELOC, CUL5 and RBX1, in cooperation with viral E1B-55K. This viral RING-type ligase ubiquitinates cellular substrates prior to proteasomal degradation: p53/TP53, LIG4, MRE11-RAD50-NBS1 (MRN) complex, ITGA3, DAXX and BLM. In Canine adenovirus serotype 2 (strain Toronto A 26-61) (CAdV-2), this protein is Early E4 30 kDa protein.